A 280-amino-acid polypeptide reads, in one-letter code: Ribosomal RNA-processing protein 7 homolog A (280 aa).

The RRM domain maps to 59-159 (RTLFVLNVPP…TGIHKWISDY (101 aa)). Ser-99 is subject to Phosphoserine.

The protein belongs to the RRP7 family. As to quaternary structure, part of the small subunit (SSU) processome, composed of more than 70 proteins and the RNA chaperone small nucleolar RNA (snoRNA) U3. Interacts with NOL6; required for NOL6 localization to nucleolus.

It localises to the nucleus. Its subcellular location is the nucleolus. The protein localises to the cell projection. The protein resides in the cilium. It is found in the cytoplasm. It localises to the cytoskeleton. Its subcellular location is the microtubule organizing center. The protein localises to the centrosome. In terms of biological role, nucleolar protein that is involved in ribosomal RNA (rRNA) processing. Also plays a role in primary cilia resorption, and cell cycle progression in neurogenesis and neocortex development. Part of the small subunit (SSU) processome, first precursor of the small eukaryotic ribosomal subunit. During the assembly of the SSU processome in the nucleolus, many ribosome biogenesis factors, an RNA chaperone and ribosomal proteins associate with the nascent pre-rRNA and work in concert to generate RNA folding, modifications, rearrangements and cleavage as well as targeted degradation of pre-ribosomal RNA by the RNA exosome. This is Ribosomal RNA-processing protein 7 homolog A (RRP7A) from Pongo abelii (Sumatran orangutan).